Here is a 105-residue protein sequence, read N- to C-terminus: uncharacterized protein (105 aa).

This is an uncharacterized protein from Microplitis demolitor (Parasitoid wasp).